Consider the following 87-residue polypeptide: UPF0250 protein ETA_23570 (87 aa).

This sequence belongs to the UPF0250 family.

The protein is UPF0250 protein ETA_23570 of Erwinia tasmaniensis (strain DSM 17950 / CFBP 7177 / CIP 109463 / NCPPB 4357 / Et1/99).